The chain runs to 583 residues: GTP diphosphokinase CRSH1, chloroplastic (583 aa).

The span at 1–13 (MATAATTSAAAIP) shows a compositional bias: low complexity. The segment at 1–68 (MATAATTSAA…SSSSSTPAEG (68 aa)) is disordered. Residues 1-69 (MATAATTSAA…SSSSTPAEGG (69 aa)) constitute a chloroplast transit peptide. Residues 19-39 (RRQHPHPRRPGLRPRRLHRLR) show a composition bias toward basic residues. Over residues 40-66 (LPAQAAAAAAASSPSTSSSSSSSSTPA) the composition is skewed to low complexity. The region spanning 119-219 (ALARALAIAA…LELALKLDMM (101 aa)) is the HD domain. 2 consecutive EF-hand domains span residues 473–508 (GDSN…LGAG) and 510–542 (KDAK…IELM). Ca(2+) is bound by residues Asp-486, Asn-488, Asp-490, Arg-492, Glu-497, Asp-520, Asn-522, Asp-524, Ser-526, and Glu-531.

This sequence belongs to the RelA/SpoT family. As to expression, expressed in roots and shoots.

Its subcellular location is the plastid. It localises to the chloroplast. The enzyme catalyses GTP + ATP = guanosine 3'-diphosphate 5'-triphosphate + AMP. Its activity is regulated as follows. Activated by calcium. Functionally, possesses calcium-dependent ppGpp (guanosine 3'-diphosphate 5'-diphosphate) synthetase activity in vitro and is able to functionally complement E.coli relA mutants. May be involved in a rapid plant ppGpp-mediated response to pathogens and other stresses. In Oryza sativa subsp. japonica (Rice), this protein is GTP diphosphokinase CRSH1, chloroplastic.